The following is a 464-amino-acid chain: MAVYNYDVVVLGSGPAGEGAAMNAAKAGRKVAMVDDRRQVGGNCTHLGTIPSKALRHSVRQIMQFNTNPMFRAIGEPRWFSFPDVLKSAEKVIAKQVASRTGYYARNRVDVFVGTGSFADEQTVEVVCPNGVVEKLNAKHIIIATGSRPYRPADIDFHHPRVYDSDTILSLSHTPRKLIVYGAGVIGCEYASIFSGLGVLVELVDNRGQLLSFLDSEISQALSYHFSNNNITVRHNEEYERVEGLDNGVILHLKSGKKIKADALLWCNGRTGNTDKLGLENIGIKVNSRGQIEVDEAYRTTVPNIYGAGDVIGWPSLASAAHDQGRSAAGSIVDNGSWRFVNDVPTGIYTIPEISSIGKNEQELTQAKVPYEVGKAFFKSMARAQIAGEPQGMLKILFHRETLEILGVHCFGYQASEIVHIGQAIMNQPGEQNNLKYFVNTTFNYPTMAEAYRVAAYDGLNRLF.

35 to 44 (DDRRQVGGNC) provides a ligand contact to FAD.

Belongs to the class-I pyridine nucleotide-disulfide oxidoreductase family. It depends on FAD as a cofactor.

It is found in the cytoplasm. The enzyme catalyses NAD(+) + NADPH = NADH + NADP(+). In terms of biological role, conversion of NADPH, generated by peripheral catabolic pathways, to NADH, which can enter the respiratory chain for energy generation. The polypeptide is Soluble pyridine nucleotide transhydrogenase (Pseudomonas putida (strain ATCC 47054 / DSM 6125 / CFBP 8728 / NCIMB 11950 / KT2440)).